A 209-amino-acid chain; its full sequence is MEKLYNENEGMASNQGKMENEEQPQDERKPEVACTLEDKKLENEGKTENKGKTGDEEMLKDKGKPESEGKAKEGKSEREGESEMEGGSEREGKPESEGEPGSETRAAGKRPAEDDVPRKAKRKTNKGLAHYLKEYKEAIHDMNFSNEDMIREFDNMAKVQDEKRKSKQKLGAFLWMQRNLQDPFYPRGPREFRGGCRAPRRDIEDIPYV.

Residue methionine 1 is modified to N-acetylmethionine. Positions 1 to 125 (MEKLYNENEG…VPRKAKRKTN (125 aa)) are disordered. Residues 25–96 (QDERKPEVAC…GSEREGKPES (72 aa)) are compositionally biased toward basic and acidic residues. Residues serine 88 and serine 96 each carry the phosphoserine modification.

This sequence belongs to the TFS-II family. TFA subfamily.

The protein resides in the nucleus. In terms of biological role, may be involved in transcriptional regulation. This is Transcription elongation factor A protein-like 4 (TCEAL4) from Pongo abelii (Sumatran orangutan).